The following is an 85-amino-acid chain: Small ribosomal subunit protein bS20 (85 aa).

Disordered stretches follow at residues 1 to 25 and 62 to 85; these read MANI…ASIK and ARKG…QVNA.

The protein belongs to the bacterial ribosomal protein bS20 family.

Binds directly to 16S ribosomal RNA. This chain is Small ribosomal subunit protein bS20, found in Bacillus cereus (strain G9842).